The sequence spans 209 residues: Large ribosomal subunit protein uL3 (209 aa).

The protein belongs to the universal ribosomal protein uL3 family. In terms of assembly, part of the 50S ribosomal subunit. Forms a cluster with proteins L14 and L19.

Its function is as follows. One of the primary rRNA binding proteins, it binds directly near the 3'-end of the 23S rRNA, where it nucleates assembly of the 50S subunit. The polypeptide is Large ribosomal subunit protein uL3 (Lactiplantibacillus plantarum (strain ATCC BAA-793 / NCIMB 8826 / WCFS1) (Lactobacillus plantarum)).